Consider the following 266-residue polypeptide: Trypsin Blo t 3 (266 aa).

Residues 1 to 15 form the signal peptide; the sequence is MKVLVLFCLVSLAAA. A propeptide spanning residues 16–35 is cleaved from the precursor; the sequence is GPLKDALNKAQVDAFYAEGY. In terms of domain architecture, Peptidase S1 spans 36 to 260; the sequence is IVDGSNAADG…RVGNYISWIK (225 aa). Cysteines 60 and 76 form a disulfide. Active-site charge relay system residues include His75 and Asp120. 2 disulfides stabilise this stretch: Cys187/Cys204 and Cys216/Cys240. The Charge relay system role is filled by Ser220.

The protein belongs to the peptidase S1 family.

The protein resides in the secreted. The catalysed reaction is Preferential cleavage: Arg-|-Xaa, Lys-|-Xaa.. The chain is Trypsin Blo t 3 from Blomia tropicalis (Mite).